We begin with the raw amino-acid sequence, 356 residues long: AT-hook motif nuclear-localized protein 1 (356 aa).

The disordered stretch occupies residues 1 to 127 (MVLNMESTGE…PSHLPPPSSH (127 aa)). Over residues 49 to 66 (VTPPPPQPSSHHTAPPPL) the composition is skewed to pro residues. The segment covering 88–97 (MKKKRGRPRK) has biased composition (basic residues). Positions 89–97 (KKKRGRPRK) match the Bipartite nuclear localization signal motif. Residues 89 to 101 (KKKRGRPRKYGPD) constitute a DNA-binding region (a.T hook). The span at 106–118 (ALSPKPISSAPAP) shows a compositional bias: low complexity. A PPC domain is found at 167–309 (GGNFTPHIIT…KHDFMLSSPT (143 aa)). The interval 270 to 287 (GLLVAASPVQVVVGSFLA) is required for nuclear localization. A Nuclear localization signal motif is present at residues 295-302 (KPKKNKHD).

Its subcellular location is the nucleus. It is found in the nucleoplasm. The protein localises to the chromosome. In terms of biological role, transcription factor that specifically binds AT-rich DNA sequences related to the nuclear matrix attachment regions (MARs). May play a function in the positioning of chromatin fibers within the nucleus. This chain is AT-hook motif nuclear-localized protein 1, found in Arabidopsis thaliana (Mouse-ear cress).